Here is a 373-residue protein sequence, read N- to C-terminus: RNA 3'-terminal phosphate cyclase-like protein (373 aa).

The protein belongs to the RNA 3'-terminal cyclase family. Type 2 subfamily. As to quaternary structure, part of the small subunit (SSU) processome, composed of more than 70 proteins and the RNA chaperone small nucleolar RNA (snoRNA) U3. Interacts with BMS1.

Its subcellular location is the nucleus. The protein localises to the nucleolus. In terms of biological role, as part of the small subunit (SSU) processome, it plays a role in 40S-ribosomal-subunit biogenesis in the early pre-rRNA processing steps at sites A0, A1 and A2 that are required for proper maturation of the 18S RNA. Activates BMS1 by promoting GDP/GTP exchange. Does not have cyclase activity. This Mus musculus (Mouse) protein is RNA 3'-terminal phosphate cyclase-like protein (Rcl1).